A 606-amino-acid polypeptide reads, in one-letter code: Anthranilate synthase alpha subunit 2, chloroplastic (606 aa).

The transit peptide at 1-49 directs the protein to the chloroplast; it reads MESIAAATFTPSRLAARPATPAAAAAPVRARAAVAAGGRRRTSRRGGVR.

Belongs to the anthranilate synthase component I family. In terms of assembly, heterotetramer consisting of two non-identical subunits: a beta subunit and a large alpha subunit.

Its subcellular location is the plastid. The protein localises to the chloroplast. The catalysed reaction is chorismate + L-glutamine = anthranilate + pyruvate + L-glutamate + H(+). Its pathway is amino-acid biosynthesis; L-tryptophan biosynthesis; L-tryptophan from chorismate: step 1/5. Its activity is regulated as follows. Feedback inhibition by tryptophan. Its function is as follows. Part of a heterotetrameric complex that catalyzes the two-step biosynthesis of anthranilate, an intermediate in the biosynthesis of L-tryptophan. In the first step, the glutamine-binding beta subunit of anthranilate synthase (AS) provides the glutamine amidotransferase activity which generates ammonia as a substrate that, along with chorismate, is used in the second step, catalyzed by the large alpha subunit of AS to produce anthranilate. This is Anthranilate synthase alpha subunit 2, chloroplastic from Oryza sativa subsp. japonica (Rice).